Here is a 171-residue protein sequence, read N- to C-terminus: Phosphinothricin N-acetyltransferase (171 aa).

In terms of domain architecture, N-acetyltransferase spans 7-171 (VQVRPGVEED…WDVAWYERPL (165 aa)). Residues 94 to 96 (VYV), 102 to 107 (GRGIGS), and Asn-133 each bind acetyl-CoA.

Belongs to the acetyltransferase family. PAT/BAR subfamily.

It carries out the reaction phosphinothricin + acetyl-CoA = N-acetylphosphinothricin + CoA + H(+). In terms of biological role, inactivates phosphinothricin (PPT) by transfer of an acetyl group from acetyl CoA. The physiological substrate could be a structurally related compound. This is Phosphinothricin N-acetyltransferase from Streptomyces coelicolor (strain ATCC BAA-471 / A3(2) / M145).